A 293-amino-acid polypeptide reads, in one-letter code: FAS1 domain-containing protein DEHA2G15708g (293 aa).

Residues methionine 1–serine 18 form the signal peptide. Residues aspartate 76–lysine 87 show a composition bias toward basic and acidic residues. The tract at residues aspartate 76–arginine 126 is disordered. Residues glutamine 141–leucine 290 enclose the FAS1 domain.

It is found in the vacuole. In Debaryomyces hansenii (strain ATCC 36239 / CBS 767 / BCRC 21394 / JCM 1990 / NBRC 0083 / IGC 2968) (Yeast), this protein is FAS1 domain-containing protein DEHA2G15708g.